A 303-amino-acid chain; its full sequence is Growth/differentiation factor 15 (303 aa).

A signal peptide spans 1-30 (MALRALHAQPTGGPQLRFLLFLLLLLLLLS). The propeptide occupies 31-188 (WPSQGDALAL…LRSAAGRGRR (158 aa)). A glycan (N-linked (GlcNAc...) asparagine) is linked at Asn71. 4 cysteine pairs are disulfide-bonded: Cys198–Cys205, Cys206–Cys269, Cys235–Cys300, and Cys239–Cys302.

Belongs to the TGF-beta family. As to quaternary structure, homodimer; disulfide-linked. Interacts with GFRAL and RET; ligand of GFRAL, which mediates GDF15 internalization and cellular signaling through interaction with RET via the formation of a 2:2:2 ternary complex composed of GDF15, GFRAL and RET. Detected in plasma (at protein level).

The protein localises to the secreted. Functionally, hormone produced in response to various stresses to confer information about those stresses to the brain, and trigger an aversive response, characterized by nausea and/or loss of appetite. The aversive response is both required to reduce continuing exposure to those stresses at the time of exposure and to promote avoidance behavior in the future. Acts by binding to its receptor, GFRAL, activating GFRAL-expressing neurons localized in the area postrema and nucleus tractus solitarius of the brainstem. It then triggers the activation of neurons localized within the parabrachial nucleus and central amygdala, which constitutes part of the 'emergency circuit' that shapes responses to stressful conditions. The GDF15-GFRAL signal induces expression of genes involved in metabolism, such as lipid metabolism in adipose tissues. Contributes to the effect of metformin, an anti-diabetic drug, on appetite reduction and weight loss: produced in the kidney in response to metformin treatment, thereby activating the GDF15-GFRAL response, leading to reduced appetite and weight. Required for avoidance behavior in response to food allergens: induced downstream of mast cell activation to promote aversion and minimize harmful effects of exposure to noxious substances. Produced in response to anticancer drugs, such as camptothecin or cisplatin, promoting nausea and contributing to malnutrition. Overproduced in many cancers, promoting anorexia in cancer (cachexia). Responsible for the risk of nausea during pregnancy: high levels of GDF15 during pregnancy, mostly originating from embryos, are associated with increased nausea. Maternal sensitivity to nausea is probably determined by pre-pregnancy exposure to GDF15, females with naturally high level of GDF15 being less susceptible to nausea than female rats with low levels of GDF15 before pregnancy. Promotes metabolic adaptation in response to systemic inflammation caused by bacterial and viral infections in order to promote tissue tolerance and prevent tissue damage. Required for tissue tolerance in response to myocardial infarction by acting as an inhibitor of leukocyte integring activation, thereby protecting against cardiac rupture. Inhibits growth hormone signaling on hepatocytes. The polypeptide is Growth/differentiation factor 15 (Rattus norvegicus (Rat)).